The sequence spans 123 residues: Large ribosomal subunit protein bL17 (123 aa).

The protein belongs to the bacterial ribosomal protein bL17 family. In terms of assembly, part of the 50S ribosomal subunit. Contacts protein L32.

In Borreliella burgdorferi (strain ZS7) (Borrelia burgdorferi), this protein is Large ribosomal subunit protein bL17.